The chain runs to 513 residues: GMP synthase [glutamine-hydrolyzing] (513 aa).

The Glutamine amidotransferase type-1 domain occupies 9–198; the sequence is LILVLDFGSQ…VRRVCECKGQ (190 aa). Cysteine 86 serves as the catalytic Nucleophile. Active-site residues include histidine 172 and glutamate 174. Residues 199-388 enclose the GMPS ATP-PPase domain; it reads WTMENFIEIE…LGIPEHLVWR (190 aa). ATP is bound at residue 226–232; the sequence is SGGVDSS.

In terms of assembly, homodimer.

The enzyme catalyses XMP + L-glutamine + ATP + H2O = GMP + L-glutamate + AMP + diphosphate + 2 H(+). Its pathway is purine metabolism; GMP biosynthesis; GMP from XMP (L-Gln route): step 1/1. Functionally, catalyzes the synthesis of GMP from XMP. The polypeptide is GMP synthase [glutamine-hydrolyzing] (Staphylococcus aureus (strain MSSA476)).